A 183-amino-acid chain; its full sequence is DLKAGGKNKKTKRTSPKSNDIYLKLLVKLYRFLVRRTDSNFNAVILKRLFMSKVNRPPLSLSRLIKYMQGKEGKIGVVVGAVTDDIRVYDVPTIKVTALKFTETARARIQKAGGECLTFDQLALRLPLTDTVLLRGPKNAREAVKHFGPAPGVPHSHTKPYVRSKGRKFEKARGRRKSRGFRV.

Residues 146–183 form a disordered region; that stretch reads HFGPAPGVPHSHTKPYVRSKGRKFEKARGRRKSRGFRV. Composition is skewed to basic residues over residues 156 to 166 and 173 to 183; these read SHTKPYVRSKG and RGRRKSRGFRV.

Belongs to the eukaryotic ribosomal protein eL18 family.

The sequence is that of Large ribosomal subunit protein eL18 (RPL18) from Cicer arietinum (Chickpea).